A 466-amino-acid chain; its full sequence is Ornithine decarboxylase (466 aa).

Lysine 116 carries the post-translational modification N6-(pyridoxal phosphate)lysine. Pyridoxal 5'-phosphate-binding positions include serine 247, glycine 286, and 318–321 (EPGR). 362 to 363 (FD) contacts substrate. Residue cysteine 411 is the Proton donor; shared with dimeric partner of the active site. Residue aspartate 412 coordinates substrate. Tyrosine 441 serves as a coordination point for pyridoxal 5'-phosphate.

This sequence belongs to the Orn/Lys/Arg decarboxylase class-II family. In terms of assembly, homodimer. Only the dimer is catalytically active, as the active sites are constructed of residues from both monomers. It depends on pyridoxal 5'-phosphate as a cofactor.

It localises to the cytoplasm. It catalyses the reaction L-ornithine + H(+) = putrescine + CO2. It participates in amine and polyamine biosynthesis; putrescine biosynthesis via L-ornithine pathway; putrescine from L-ornithine: step 1/1. Inhibited by antizyme (AZ) OAZ1 in response to polyamine levels. AZ inhibits the assembly of the functional homodimer by binding to ODC monomers and targeting them for ubiquitin-independent proteolytic destruction by the 26S proteasome. Functionally, catalyzes the first and rate-limiting step of polyamine biosynthesis that converts ornithine into putrescine, which is the precursor for the polyamines, spermidine and spermine. Polyamines are essential for cell proliferation and are implicated in cellular processes, ranging from DNA replication to apoptosis. The protein is Ornithine decarboxylase of Saccharomyces cerevisiae (strain ATCC 204508 / S288c) (Baker's yeast).